Reading from the N-terminus, the 271-residue chain is Formamidopyrimidine-DNA glycosylase (271 aa).

P2 serves as the catalytic Schiff-base intermediate with DNA. E3 acts as the Proton donor in catalysis. K58 serves as the catalytic Proton donor; for beta-elimination activity. DNA contacts are provided by R110 and R152. The FPG-type zinc finger occupies 237 to 271 (AVYGQTGKPCTVCGTPIARIRLGNRSTWFCPVCQK). R261 functions as the Proton donor; for delta-elimination activity in the catalytic mechanism.

The protein belongs to the FPG family. In terms of assembly, monomer. Zn(2+) serves as cofactor.

It carries out the reaction Hydrolysis of DNA containing ring-opened 7-methylguanine residues, releasing 2,6-diamino-4-hydroxy-5-(N-methyl)formamidopyrimidine.. It catalyses the reaction 2'-deoxyribonucleotide-(2'-deoxyribose 5'-phosphate)-2'-deoxyribonucleotide-DNA = a 3'-end 2'-deoxyribonucleotide-(2,3-dehydro-2,3-deoxyribose 5'-phosphate)-DNA + a 5'-end 5'-phospho-2'-deoxyribonucleoside-DNA + H(+). Its function is as follows. Involved in base excision repair of DNA damaged by oxidation or by mutagenic agents. Acts as a DNA glycosylase that recognizes and removes damaged bases. Has a preference for oxidized purines, such as 7,8-dihydro-8-oxoguanine (8-oxoG). Has AP (apurinic/apyrimidinic) lyase activity and introduces nicks in the DNA strand. Cleaves the DNA backbone by beta-delta elimination to generate a single-strand break at the site of the removed base with both 3'- and 5'-phosphates. This chain is Formamidopyrimidine-DNA glycosylase, found in Geobacter sulfurreducens (strain ATCC 51573 / DSM 12127 / PCA).